The chain runs to 251 residues: Ubiquinone/menaquinone biosynthesis C-methyltransferase UbiE (251 aa).

S-adenosyl-L-methionine-binding positions include Thr-74, Asp-95, 123–124 (NA), and Ser-140.

The protein belongs to the class I-like SAM-binding methyltransferase superfamily. MenG/UbiE family.

The catalysed reaction is a 2-demethylmenaquinol + S-adenosyl-L-methionine = a menaquinol + S-adenosyl-L-homocysteine + H(+). The enzyme catalyses a 2-methoxy-6-(all-trans-polyprenyl)benzene-1,4-diol + S-adenosyl-L-methionine = a 5-methoxy-2-methyl-3-(all-trans-polyprenyl)benzene-1,4-diol + S-adenosyl-L-homocysteine + H(+). Its pathway is quinol/quinone metabolism; menaquinone biosynthesis; menaquinol from 1,4-dihydroxy-2-naphthoate: step 2/2. The protein operates within cofactor biosynthesis; ubiquinone biosynthesis. Methyltransferase required for the conversion of demethylmenaquinol (DMKH2) to menaquinol (MKH2) and the conversion of 2-polyprenyl-6-methoxy-1,4-benzoquinol (DDMQH2) to 2-polyprenyl-3-methyl-6-methoxy-1,4-benzoquinol (DMQH2). The polypeptide is Ubiquinone/menaquinone biosynthesis C-methyltransferase UbiE (Serratia proteamaculans (strain 568)).